The following is a 465-amino-acid chain: 23S rRNA (uracil(1939)-C(5))-methyltransferase RlmD (465 aa).

The segment at 1-20 is disordered; it reads MSEAVPLSTPGASHAGAATD. The region spanning 12–80 is the TRAM domain; it reads ASHAGAATDR…PTYEQAQVVD (69 aa). 4 residues coordinate [4Fe-4S] cluster: C93, C99, C102, and C181. S-adenosyl-L-methionine is bound by residues Q289, F318, N323, E339, N367, and D388. Catalysis depends on C421, which acts as the Nucleophile.

This sequence belongs to the class I-like SAM-binding methyltransferase superfamily. RNA M5U methyltransferase family. RlmD subfamily.

It catalyses the reaction uridine(1939) in 23S rRNA + S-adenosyl-L-methionine = 5-methyluridine(1939) in 23S rRNA + S-adenosyl-L-homocysteine + H(+). Catalyzes the formation of 5-methyl-uridine at position 1939 (m5U1939) in 23S rRNA. The sequence is that of 23S rRNA (uracil(1939)-C(5))-methyltransferase RlmD from Burkholderia thailandensis (strain ATCC 700388 / DSM 13276 / CCUG 48851 / CIP 106301 / E264).